Consider the following 239-residue polypeptide: Large ribosomal subunit protein uL2 (239 aa).

Residues 202–239 (HGGGSHQHVGRPSTVARNTPPGRKVGHIAARRTGRRKG) form a disordered region. Over residues 225–239 (KVGHIAARRTGRRKG) the composition is skewed to basic residues.

It belongs to the universal ribosomal protein uL2 family. In terms of assembly, part of the 50S ribosomal subunit. Forms a bridge to the 30S subunit in the 70S ribosome.

In terms of biological role, one of the primary rRNA binding proteins. Required for association of the 30S and 50S subunits to form the 70S ribosome, for tRNA binding and peptide bond formation. It has been suggested to have peptidyltransferase activity; this is somewhat controversial. Makes several contacts with the 16S rRNA in the 70S ribosome. In Desulfurococcus amylolyticus (strain DSM 18924 / JCM 16383 / VKM B-2413 / 1221n) (Desulfurococcus kamchatkensis), this protein is Large ribosomal subunit protein uL2.